A 338-amino-acid polypeptide reads, in one-letter code: Lipoate-protein ligase A (338 aa).

The region spanning 29–216 (SPDQRVLFLW…AFFNYYDEKV (188 aa)) is the BPL/LPL catalytic domain. ATP-binding positions include Arg71, 76 to 79 (GAVF), and Lys134. Lys134 is a (R)-lipoate binding site.

This sequence belongs to the LplA family. Monomer.

Its subcellular location is the cytoplasm. The enzyme catalyses L-lysyl-[lipoyl-carrier protein] + (R)-lipoate + ATP = N(6)-[(R)-lipoyl]-L-lysyl-[lipoyl-carrier protein] + AMP + diphosphate + H(+). It participates in protein modification; protein lipoylation via exogenous pathway; protein N(6)-(lipoyl)lysine from lipoate: step 1/2. It functions in the pathway protein modification; protein lipoylation via exogenous pathway; protein N(6)-(lipoyl)lysine from lipoate: step 2/2. Its function is as follows. Catalyzes both the ATP-dependent activation of exogenously supplied lipoate to lipoyl-AMP and the transfer of the activated lipoyl onto the lipoyl domains of lipoate-dependent enzymes. This Yersinia enterocolitica serotype O:8 / biotype 1B (strain NCTC 13174 / 8081) protein is Lipoate-protein ligase A.